We begin with the raw amino-acid sequence, 304 residues long: Recombination-associated protein RdgC (304 aa).

Belongs to the RdgC family.

Its subcellular location is the cytoplasm. The protein resides in the nucleoid. In terms of biological role, may be involved in recombination. This Dechloromonas aromatica (strain RCB) protein is Recombination-associated protein RdgC.